A 181-amino-acid polypeptide reads, in one-letter code: MSIEALKTQLPAFAKDVKLNLSALPREDSLTEQQLYGLLVACGYTTRNGTVAQALEAEAAPHLSPAALDAAKAAASIMAMNNVYYRFTHLASNKAYETLPAKLRMSVIGNPGVDKVDFELWSLAVSAMNGCGRCIDAHEAVLREAGLSEAQIQTAVRVGAIIASAAVALEAAGAGFPEAAE.

The active-site Proton donor is the Cys-131. Cys-131 and Cys-134 are oxidised to a cystine. Cys-134 acts as the Cysteine sulfenic acid (-SOH) intermediate in catalysis.

Belongs to the AhpD family.

It catalyses the reaction N(6)-[(R)-dihydrolipoyl]-L-lysyl-[lipoyl-carrier protein] + a hydroperoxide = N(6)-[(R)-lipoyl]-L-lysyl-[lipoyl-carrier protein] + an alcohol + H2O. Antioxidant protein with alkyl hydroperoxidase activity. Required for the reduction of the AhpC active site cysteine residues and for the regeneration of the AhpC enzyme activity. The chain is Alkyl hydroperoxide reductase AhpD from Azorhizobium caulinodans (strain ATCC 43989 / DSM 5975 / JCM 20966 / LMG 6465 / NBRC 14845 / NCIMB 13405 / ORS 571).